A 483-amino-acid polypeptide reads, in one-letter code: Glycogen synthase (483 aa).

Residue K15 coordinates ADP-alpha-D-glucose.

This sequence belongs to the glycosyltransferase 1 family. Bacterial/plant glycogen synthase subfamily.

It catalyses the reaction [(1-&gt;4)-alpha-D-glucosyl](n) + ADP-alpha-D-glucose = [(1-&gt;4)-alpha-D-glucosyl](n+1) + ADP + H(+). It participates in glycan biosynthesis; glycogen biosynthesis. Synthesizes alpha-1,4-glucan chains using ADP-glucose. The polypeptide is Glycogen synthase (Desulfatibacillum aliphaticivorans).